Consider the following 432-residue polypeptide: Neuronal pentraxin-1 (432 aa).

Positions 1–22 are cleaved as a signal peptide; the sequence is MPAGRAARTCALLALCLLGAGA. The tract at residues 90–122 is disordered; that stretch reads ESQSTLDPGAGEARAGGGRKQPGSGKNTMGDLS. N-linked (GlcNAc...) asparagine glycosylation is found at Asn154 and Asn193. In terms of domain architecture, Pentraxin (PTX) spans 226-428; sequence DKFQLTFPLR…GATKWTFEAC (203 aa). A disulfide bridge links Cys256 with Cys316. 5 residues coordinate Ca(2+): Asn280, Glu358, Gln359, Asp360, and Gln370.

In terms of assembly, homooligomer or heterooligomer (probably pentamer) with neuronal pentraxin receptor (NPTXR). Ca(2+) is required as a cofactor.

Its subcellular location is the secreted. It is found in the cytoplasmic vesicle. The protein localises to the secretory vesicle. The protein resides in the endoplasmic reticulum. Functionally, may be involved in mediating uptake of synaptic material during synapse remodeling or in mediating the synaptic clustering of AMPA glutamate receptors at a subset of excitatory synapses. In Homo sapiens (Human), this protein is Neuronal pentraxin-1 (NPTX1).